We begin with the raw amino-acid sequence, 352 residues long: Lipase chaperone (352 aa).

The chain crosses the membrane as a helical span at residues 7-28; it reads LSLVAVVVAGGLTLYWRWPAAV.

It belongs to the lipase chaperone family.

It is found in the cell inner membrane. In terms of biological role, may be involved in the folding of the extracellular lipase during its passage through the periplasm. The protein is Lipase chaperone (lifO) of Pseudomonas wisconsinensis.